The sequence spans 367 residues: Probable trehalose-phosphate phosphatase 4 (367 aa).

Belongs to the trehalose phosphatase family. A divalent metal cation serves as cofactor.

It catalyses the reaction alpha,alpha-trehalose 6-phosphate + H2O = alpha,alpha-trehalose + phosphate. The protein operates within glycan biosynthesis; trehalose biosynthesis. Removes the phosphate from trehalose 6-phosphate to produce free trehalose. Trehalose accumulation in plant may improve abiotic stress tolerance. This Oryza sativa subsp. japonica (Rice) protein is Probable trehalose-phosphate phosphatase 4 (TPP4).